A 208-amino-acid polypeptide reads, in one-letter code: Small ribosomal subunit protein uS4 (208 aa).

The 63-residue stretch at 98-160 (RRLDNVVYRM…SKNNVQIQRA (63 aa)) folds into the S4 RNA-binding domain.

It belongs to the universal ribosomal protein uS4 family. Part of the 30S ribosomal subunit. Contacts protein S5. The interaction surface between S4 and S5 is involved in control of translational fidelity.

In terms of biological role, one of the primary rRNA binding proteins, it binds directly to 16S rRNA where it nucleates assembly of the body of the 30S subunit. With S5 and S12 plays an important role in translational accuracy. The chain is Small ribosomal subunit protein uS4 from Nautilia profundicola (strain ATCC BAA-1463 / DSM 18972 / AmH).